The following is a 400-amino-acid chain: Probable tRNA sulfurtransferase (400 aa).

The THUMP domain maps to 60–164 (EPIIEKLKNV…KEATYITSGT (105 aa)). ATP is bound by residues 182-183 (LL), 207-208 (HF), R264, G286, and Q295.

It belongs to the ThiI family.

Its subcellular location is the cytoplasm. The enzyme catalyses [ThiI sulfur-carrier protein]-S-sulfanyl-L-cysteine + a uridine in tRNA + 2 reduced [2Fe-2S]-[ferredoxin] + ATP + H(+) = [ThiI sulfur-carrier protein]-L-cysteine + a 4-thiouridine in tRNA + 2 oxidized [2Fe-2S]-[ferredoxin] + AMP + diphosphate. The catalysed reaction is [ThiS sulfur-carrier protein]-C-terminal Gly-Gly-AMP + S-sulfanyl-L-cysteinyl-[cysteine desulfurase] + AH2 = [ThiS sulfur-carrier protein]-C-terminal-Gly-aminoethanethioate + L-cysteinyl-[cysteine desulfurase] + A + AMP + 2 H(+). Its pathway is cofactor biosynthesis; thiamine diphosphate biosynthesis. Functionally, catalyzes the ATP-dependent transfer of a sulfur to tRNA to produce 4-thiouridine in position 8 of tRNAs, which functions as a near-UV photosensor. Also catalyzes the transfer of sulfur to the sulfur carrier protein ThiS, forming ThiS-thiocarboxylate. This is a step in the synthesis of thiazole, in the thiamine biosynthesis pathway. The sulfur is donated as persulfide by IscS. The sequence is that of Probable tRNA sulfurtransferase from Oceanobacillus iheyensis (strain DSM 14371 / CIP 107618 / JCM 11309 / KCTC 3954 / HTE831).